The following is a 114-amino-acid chain: UPF0145 protein SSO1976 (114 aa).

The protein belongs to the UPF0145 family.

The chain is UPF0145 protein SSO1976 from Saccharolobus solfataricus (strain ATCC 35092 / DSM 1617 / JCM 11322 / P2) (Sulfolobus solfataricus).